The chain runs to 500 residues: L-arabinose isomerase (500 aa).

E306, E333, H350, and H450 together coordinate Mn(2+).

This sequence belongs to the arabinose isomerase family. In terms of assembly, homohexamer. Mn(2+) is required as a cofactor.

It carries out the reaction beta-L-arabinopyranose = L-ribulose. It functions in the pathway carbohydrate degradation; L-arabinose degradation via L-ribulose; D-xylulose 5-phosphate from L-arabinose (bacterial route): step 1/3. Catalyzes the conversion of L-arabinose to L-ribulose. This is L-arabinose isomerase from Shigella flexneri.